The chain runs to 41 residues: Omega-theraphotoxin-Hg1a (41 aa).

3 disulfides stabilise this stretch: cysteine 7–cysteine 21, cysteine 14–cysteine 26, and cysteine 20–cysteine 33.

It belongs to the neurotoxin 10 (Hwtx-1) family. 56 (SNX-482) subfamily. Expressed by the venom gland.

It localises to the secreted. Toxin that blocks vertebrate P/Q-type (Cav2.1/CACNA1A) and R-type (Cav2.3/CACNA1E) voltage-gated calcium channels. Also inhibits sodium channels (Nav) in bovine chromaffin cells by delaying sodium channel inactivation. This Hysterocrates gigas (Cameroon red baboon tarantula) protein is Omega-theraphotoxin-Hg1a.